Consider the following 410-residue polypeptide: Argininosuccinate synthase (410 aa).

ATP is bound by residues 11 to 19 (AYSGGLDTS) and alanine 37. 2 residues coordinate L-citrulline: tyrosine 88 and serine 93. 116–124 (SHGCTGKGN) is a binding site for ATP. L-aspartate is bound by residues threonine 120, asparagine 124, and aspartate 125. Position 124 (asparagine 124) interacts with L-citrulline. Residues arginine 128, serine 181, serine 190, glutamate 269, and tyrosine 281 each coordinate L-citrulline.

Belongs to the argininosuccinate synthase family. Type 1 subfamily. As to quaternary structure, homotetramer.

It is found in the cytoplasm. The enzyme catalyses L-citrulline + L-aspartate + ATP = 2-(N(omega)-L-arginino)succinate + AMP + diphosphate + H(+). Its pathway is amino-acid biosynthesis; L-arginine biosynthesis; L-arginine from L-ornithine and carbamoyl phosphate: step 2/3. This chain is Argininosuccinate synthase (arg12), found in Schizosaccharomyces pombe (strain 972 / ATCC 24843) (Fission yeast).